Reading from the N-terminus, the 388-residue chain is F-box protein At5g42460 (388 aa).

Positions 1 to 47 constitute an F-box domain; it reads MTIMSDLPRDLLAEILSRVPLTSLRAVRLTCKKWNDLSKDRSFLKKQ.

This Arabidopsis thaliana (Mouse-ear cress) protein is F-box protein At5g42460.